The following is a 436-amino-acid chain: MRVVSSLFLPVLLAEVWLVSSFNLSSHSPEAPIRLVSQDYENQTWEEYEWADPRDDNEYWLRASQQLSNETSSFGFSLLRKISMRHDGNVIFSPFGLSVAMVNLMLGAKGETKVQVENGLNLQALSQAGPLILPALFKRVKETFSSNKKLGLTQGSFAFIHKDFEIKKTYFNLSTMYFDTEYVPTNFRNSSQARGLMNHYINKETEGKIPKLFDEINPETKLILVDYILFKGKWLTPFDPIFTEADTFHLDKYKAVKVPMMYREGNFASTFDKKFRCHILKLPYQGNATMLVVLMEKSGDHLALEDYLTTDLVEMWLQDMKTRKMEVFFPKFKLNQRYEMHELLKQVGIRRIFSTSADLSELSAVARNLQVSKVVQQSVLEVDERGTEVVSGTVSEITAYCMPPVIKVDRPFHFIIYEEMSQMLLFLGRVVNPTVL.

The signal sequence occupies residues 1-20 (MRVVSSLFLPVLLAEVWLVS). Residues Asn23, Asn42, and Asn69 are each glycosylated (N-linked (GlcNAc...) asparagine). The interval 128–145 (AGPLILPALFKRVKETFS) is heparin-binding. N-linked (GlcNAc...) asparagine glycosylation is found at Asn172, Asn189, and Asn287.

The protein belongs to the serpin family. In terms of processing, phosphorylated by FAM20C in the extracellular medium. As to expression, expressed by the liver and secreted in plasma.

It localises to the secreted. Functionally, inhibits activity of the coagulation protease factor Xa in the presence of PROZ, calcium and phospholipids. Also inhibits factor XIa in the absence of cofactors. The sequence is that of Protein Z-dependent protease inhibitor (Serpina10) from Rattus norvegicus (Rat).